Here is a 292-residue protein sequence, read N- to C-terminus: 2-(5''-triphosphoribosyl)-3'-dephosphocoenzyme-A synthase (292 aa).

Belongs to the CitG/MdcB family.

The enzyme catalyses 3'-dephospho-CoA + ATP = 2'-(5''-triphospho-alpha-D-ribosyl)-3'-dephospho-CoA + adenine. Functionally, catalyzes the formation of 2-(5''-triphosphoribosyl)-3'-dephosphocoenzyme-A, the precursor of the prosthetic group of the holo-acyl carrier protein (gamma chain) of citrate lyase, from ATP and dephospho-CoA. In Escherichia coli O7:K1 (strain IAI39 / ExPEC), this protein is 2-(5''-triphosphoribosyl)-3'-dephosphocoenzyme-A synthase.